Here is a 935-residue protein sequence, read N- to C-terminus: Isoleucine--tRNA ligase (935 aa).

The 'HIGH' region motif lies at 58–68 (PYANGSIHVGH). Residue E558 coordinates L-isoleucyl-5'-AMP. A 'KMSKS' region motif is present at residues 599–603 (KMSKS). Residue K602 participates in ATP binding. Zn(2+) is bound by residues C897, C900, C917, and C920.

This sequence belongs to the class-I aminoacyl-tRNA synthetase family. IleS type 1 subfamily. As to quaternary structure, monomer. It depends on Zn(2+) as a cofactor.

It is found in the cytoplasm. It carries out the reaction tRNA(Ile) + L-isoleucine + ATP = L-isoleucyl-tRNA(Ile) + AMP + diphosphate. Catalyzes the attachment of isoleucine to tRNA(Ile). As IleRS can inadvertently accommodate and process structurally similar amino acids such as valine, to avoid such errors it has two additional distinct tRNA(Ile)-dependent editing activities. One activity is designated as 'pretransfer' editing and involves the hydrolysis of activated Val-AMP. The other activity is designated 'posttransfer' editing and involves deacylation of mischarged Val-tRNA(Ile). The protein is Isoleucine--tRNA ligase of Francisella tularensis subsp. tularensis (strain WY96-3418).